Here is a 233-residue protein sequence, read N- to C-terminus: DNA repair protein RecO (233 aa).

This sequence belongs to the RecO family.

Its function is as follows. Involved in DNA repair and RecF pathway recombination. In Pseudomonas aeruginosa (strain UCBPP-PA14), this protein is DNA repair protein RecO.